The following is a 372-amino-acid chain: Enoyl-[acyl-carrier-protein] reductase, mitochondrial (372 aa).

The transit peptide at 1–18 directs the protein to the mitochondrion; that stretch reads MSFFKTAVRRFSSTSITR. The active-site Proton donor is Y72. NADP(+)-binding positions include N157, 183-186, 206-208, 279-282, 304-306, and K365; these read NSMV, RNR, FGGM, and FWV.

It belongs to the zinc-containing alcohol dehydrogenase family. Quinone oxidoreductase subfamily. In terms of assembly, homodimer.

Its subcellular location is the mitochondrion matrix. The enzyme catalyses a 2,3-saturated acyl-[ACP] + NADP(+) = a (2E)-enoyl-[ACP] + NADPH + H(+). Its function is as follows. Catalyzes the NADPH-dependent reduction of trans-2-enoyl thioesters in mitochondrial fatty acid synthesis (fatty acid synthesis type II). Fatty acid chain elongation in mitochondria uses acyl carrier protein (ACP) as an acyl group carrier, but the enzyme accepts both ACP and CoA thioesters as substrates in vitro. Required for respiration and the maintenance of the mitochondrial compartment. The protein is Enoyl-[acyl-carrier-protein] reductase, mitochondrial (etr1) of Schizosaccharomyces pombe (strain 972 / ATCC 24843) (Fission yeast).